The following is a 175-amino-acid chain: NADH-ubiquinone oxidoreductase chain 6 (175 aa).

Helical transmembrane passes span 1–21 (MVTY…VGVS), 25–45 (SPIY…GVVL), 47–67 (FGGS…MLVV), 88–108 (VVLG…IYAL), and 149–169 (YGVW…VIIM).

The protein belongs to the complex I subunit 6 family. Core subunit of respiratory chain NADH dehydrogenase (Complex I) which is composed of 45 different subunits.

The protein localises to the mitochondrion inner membrane. It catalyses the reaction a ubiquinone + NADH + 5 H(+)(in) = a ubiquinol + NAD(+) + 4 H(+)(out). Its function is as follows. Core subunit of the mitochondrial membrane respiratory chain NADH dehydrogenase (Complex I) which catalyzes electron transfer from NADH through the respiratory chain, using ubiquinone as an electron acceptor. Essential for the catalytic activity and assembly of complex I. The sequence is that of NADH-ubiquinone oxidoreductase chain 6 (MT-ND6) from Balaenoptera musculus (Blue whale).